We begin with the raw amino-acid sequence, 300 residues long: E3 ubiquitin-protein ligase RNF212B (300 aa).

The segment at 6-40 adopts an RING-type zinc-finger fold; that stretch reads CNQCFRKDGAHFFVTSCGHIFCKKCVTLEKCAVCG. Residues 88–124 are a coiled coil; sequence LIAFYKHRITKLETAMQETQQALVSQDKELSVLRKEN. Disordered stretches follow at residues 141–251 and 280–300; these read YQGS…HTRV and PYQQ…TTSR. The span at 155–169 shows a compositional bias: polar residues; sequence TSPSQSVTPRPSFQH. Residues 170 to 183 are compositionally biased toward low complexity; sequence SSQVVSRSSSVESV. A compositionally biased stretch (gly residues) spans 191–200; it reads GSLGQGGRGL. Over residues 211–234 the composition is skewed to polar residues; the sequence is NETPSPASTHSLSYRPSSASSGQG.

In terms of assembly, homodimer. Post-translationally, autoubiquitinated.

It is found in the chromosome. It carries out the reaction S-ubiquitinyl-[E2 ubiquitin-conjugating enzyme]-L-cysteine + [acceptor protein]-L-lysine = [E2 ubiquitin-conjugating enzyme]-L-cysteine + N(6)-ubiquitinyl-[acceptor protein]-L-lysine.. The protein operates within protein modification; protein ubiquitination. Ubiquitin E3 ligase that acts as a crucial factor for crossing-over (CO) formation during meiosis. Essential for normal prophase I progression and for ensuring appropriate CO designation in meiosis. Recruits key components of the cross-over machinery either directly ou indirectly, leading to the activation of the MutL-gamma complex. The function of RNF212B in CO designation is dependent on its catalytic activity. In Pongo abelii (Sumatran orangutan), this protein is E3 ubiquitin-protein ligase RNF212B (RNF212B).